The primary structure comprises 299 residues: Tyrosine recombinase XerD (299 aa).

The region spanning 2 to 89 is the Core-binding (CB) domain; it reads ETVNNNLQQF…AIRSFHQFLL (88 aa). A Tyr recombinase domain is found at 110 to 293; that stretch reads RLPKALTIEE…TKTRMRDVYA (184 aa). Catalysis depends on residues R150, K174, H245, R248, and H271. The O-(3'-phospho-DNA)-tyrosine intermediate role is filled by Y280.

The protein belongs to the 'phage' integrase family. XerD subfamily. As to quaternary structure, forms a cyclic heterotetrameric complex composed of two molecules of XerC and two molecules of XerD.

The protein localises to the cytoplasm. Site-specific tyrosine recombinase, which acts by catalyzing the cutting and rejoining of the recombining DNA molecules. The XerC-XerD complex is essential to convert dimers of the bacterial chromosome into monomers to permit their segregation at cell division. It also contributes to the segregational stability of plasmids. The sequence is that of Tyrosine recombinase XerD from Halalkalibacterium halodurans (strain ATCC BAA-125 / DSM 18197 / FERM 7344 / JCM 9153 / C-125) (Bacillus halodurans).